The sequence spans 209 residues: Uracil phosphoribosyltransferase (209 aa).

5-phospho-alpha-D-ribose 1-diphosphate-binding positions include Arg79, Arg104, and 131-139; that span reads DPMLATGGS. Uracil-binding positions include Ile194 and 199-201; that span reads GDA. Asp200 contributes to the 5-phospho-alpha-D-ribose 1-diphosphate binding site.

The protein belongs to the UPRTase family. Mg(2+) is required as a cofactor.

It carries out the reaction UMP + diphosphate = 5-phospho-alpha-D-ribose 1-diphosphate + uracil. It participates in pyrimidine metabolism; UMP biosynthesis via salvage pathway; UMP from uracil: step 1/1. Its activity is regulated as follows. Allosterically activated by GTP. Its function is as follows. Catalyzes the conversion of uracil and 5-phospho-alpha-D-ribose 1-diphosphate (PRPP) to UMP and diphosphate. The chain is Uracil phosphoribosyltransferase from Streptococcus mutans serotype c (strain ATCC 700610 / UA159).